The following is a 282-amino-acid chain: Phosphatidylserine decarboxylase proenzyme (282 aa).

Catalysis depends on charge relay system; for autoendoproteolytic cleavage activity residues Asp88, His144, and Ser247. The Schiff-base intermediate with substrate; via pyruvic acid; for decarboxylase activity role is filled by Ser247. A Pyruvic acid (Ser); by autocatalysis modification is found at Ser247.

Belongs to the phosphatidylserine decarboxylase family. PSD-B subfamily. Prokaryotic type I sub-subfamily. In terms of assembly, heterodimer of a large membrane-associated beta subunit and a small pyruvoyl-containing alpha subunit. Pyruvate serves as cofactor. In terms of processing, is synthesized initially as an inactive proenzyme. Formation of the active enzyme involves a self-maturation process in which the active site pyruvoyl group is generated from an internal serine residue via an autocatalytic post-translational modification. Two non-identical subunits are generated from the proenzyme in this reaction, and the pyruvate is formed at the N-terminus of the alpha chain, which is derived from the carboxyl end of the proenzyme. The autoendoproteolytic cleavage occurs by a canonical serine protease mechanism, in which the side chain hydroxyl group of the serine supplies its oxygen atom to form the C-terminus of the beta chain, while the remainder of the serine residue undergoes an oxidative deamination to produce ammonia and the pyruvoyl prosthetic group on the alpha chain. During this reaction, the Ser that is part of the protease active site of the proenzyme becomes the pyruvoyl prosthetic group, which constitutes an essential element of the active site of the mature decarboxylase.

The protein localises to the cell membrane. The catalysed reaction is a 1,2-diacyl-sn-glycero-3-phospho-L-serine + H(+) = a 1,2-diacyl-sn-glycero-3-phosphoethanolamine + CO2. Its pathway is phospholipid metabolism; phosphatidylethanolamine biosynthesis; phosphatidylethanolamine from CDP-diacylglycerol: step 2/2. Functionally, catalyzes the formation of phosphatidylethanolamine (PtdEtn) from phosphatidylserine (PtdSer). The protein is Phosphatidylserine decarboxylase proenzyme of Xanthomonas oryzae pv. oryzae (strain KACC10331 / KXO85).